The chain runs to 159 residues: Large ribosomal subunit protein uL22c (159 aa).

Belongs to the universal ribosomal protein uL22 family. As to quaternary structure, part of the 50S ribosomal subunit.

It localises to the plastid. Its subcellular location is the chloroplast. Its function is as follows. This protein binds specifically to 23S rRNA. The globular domain of the protein is located near the polypeptide exit tunnel on the outside of the subunit, while an extended beta-hairpin is found that lines the wall of the exit tunnel in the center of the 70S ribosome. This is Large ribosomal subunit protein uL22c (rpl22) from Ipomoea purpurea (Common morning glory).